Reading from the N-terminus, the 153-residue chain is Small ribosomal subunit protein bS6 (153 aa).

The interval 94–153 is disordered; that stretch reads EAHEEGPSAMMQKRDRDDRPRRDGDRPDRGDRGDRGDRGPREGGRESFGDRPRRPREDRA.

This sequence belongs to the bacterial ribosomal protein bS6 family.

Its function is as follows. Binds together with bS18 to 16S ribosomal RNA. The polypeptide is Small ribosomal subunit protein bS6 (Allorhizobium ampelinum (strain ATCC BAA-846 / DSM 112012 / S4) (Agrobacterium vitis (strain S4))).